The primary structure comprises 296 residues: 4-diphosphocytidyl-2-C-methyl-D-erythritol kinase (296 aa).

Lys14 is a catalytic residue. ATP is bound at residue 97-107; the sequence is PMGAGMGGGSS. Asp139 is an active-site residue.

It belongs to the GHMP kinase family. IspE subfamily.

The catalysed reaction is 4-CDP-2-C-methyl-D-erythritol + ATP = 4-CDP-2-C-methyl-D-erythritol 2-phosphate + ADP + H(+). Its pathway is isoprenoid biosynthesis; isopentenyl diphosphate biosynthesis via DXP pathway; isopentenyl diphosphate from 1-deoxy-D-xylulose 5-phosphate: step 3/6. In terms of biological role, catalyzes the phosphorylation of the position 2 hydroxy group of 4-diphosphocytidyl-2C-methyl-D-erythritol. The sequence is that of 4-diphosphocytidyl-2-C-methyl-D-erythritol kinase from Polynucleobacter necessarius subsp. necessarius (strain STIR1).